The sequence spans 134 residues: ATP synthase epsilon chain (134 aa).

It belongs to the ATPase epsilon chain family. As to quaternary structure, F-type ATPases have 2 components, CF(1) - the catalytic core - and CF(0) - the membrane proton channel. CF(1) has five subunits: alpha(3), beta(3), gamma(1), delta(1), epsilon(1). CF(0) has three main subunits: a, b and c.

The protein localises to the cell membrane. Its function is as follows. Produces ATP from ADP in the presence of a proton gradient across the membrane. In Listeria monocytogenes serotype 4a (strain HCC23), this protein is ATP synthase epsilon chain.